The following is a 428-amino-acid chain: Stromal membrane-associated protein 2 (428 aa).

The region spanning Gln13–Asp139 is the Arf-GAP domain. The C4-type zinc finger occupies Cys28–Cys51. A compositionally biased stretch (basic and acidic residues) spans Val161–Gln172. Disordered stretches follow at residues Val161 to Glu182 and Ser222 to Lys258.

In terms of assembly, may interact with clathrin heavy chains.

Functionally, GTPase activating protein. May play a role in clathrin-dependent retrograde transport from early endosomes to the trans-Golgi network. This Gallus gallus (Chicken) protein is Stromal membrane-associated protein 2 (SMAP2).